Reading from the N-terminus, the 236-residue chain is MRMQLTAVLAASLLAGCQNQAFREIGQAPSMSPIGSGLQYTQAPQLAAYPKQPHQMTAGYSLWNDQQAALFKDARAINVGDILTVDIQIDDKASFNNETDRSRTNSSGFNLGASGESQTSDFEWSGNLKYGSNIKTEGDGKTERSEKLRLLVAAVVTGVLENGNLLISGSQEVRVNHELRILNVAGIVRPRDVDADNIISYDRIAEARISYGGRGRLMEVQQPPWGQQVVDLVSPI.

A signal peptide spans 1–16 (MRMQLTAVLAASLLAG). Cys17 carries the N-palmitoyl cysteine lipid modification. A lipid anchor (S-diacylglycerol cysteine) is attached at Cys17.

This sequence belongs to the FlgH family. As to quaternary structure, the basal body constitutes a major portion of the flagellar organelle and consists of four rings (L,P,S, and M) mounted on a central rod.

The protein resides in the cell outer membrane. It localises to the bacterial flagellum basal body. Its function is as follows. Assembles around the rod to form the L-ring and probably protects the motor/basal body from shearing forces during rotation. In Sinorhizobium fredii (strain NBRC 101917 / NGR234), this protein is Flagellar L-ring protein.